We begin with the raw amino-acid sequence, 266 residues long: uncharacterized protein (266 aa).

A PH domain is found at 35–131 (VLVGEGVLVK…WMLHIERCVT (97 aa)). Residues 152–212 (DGEAVKCMVC…VCDHCFDSLS (61 aa)) form an FYVE-type zinc finger. Zn(2+) contacts are provided by Cys158, Cys161, Cys175, Cys178, Cys183, Cys186, Cys204, and Cys207. The segment at 213-266 (SATPGQEESEPKTGNRLHHEDSSSDSEDEVNGSGRSSNESRPTFYREDVQQPAT) is disordered. Basic and acidic residues-rich tracts occupy residues 221–234 (SEPK…HEDS) and 256–266 (FYREDVQQPAT).

This is an uncharacterized protein from Caenorhabditis elegans.